The following is a 444-amino-acid chain: Phosphoglucosamine mutase (444 aa).

Catalysis depends on Ser-101, which acts as the Phosphoserine intermediate. Mg(2+) is bound by residues Ser-101, Asp-240, Asp-242, and Asp-244. Ser-101 is subject to Phosphoserine.

This sequence belongs to the phosphohexose mutase family. Mg(2+) is required as a cofactor. Activated by phosphorylation.

The catalysed reaction is alpha-D-glucosamine 1-phosphate = D-glucosamine 6-phosphate. Functionally, catalyzes the conversion of glucosamine-6-phosphate to glucosamine-1-phosphate. This Photobacterium profundum (strain SS9) protein is Phosphoglucosamine mutase.